The primary structure comprises 621 residues: MEKLRELLPKDQYEKIAAINNPYLHEFLAEWIEWLEPSKVFVCTDSPEDEEYVRWKALYYGEEKMLEIPKHTVHYDNYYDQARDKTNTKLLVPKGVELPFLNTMNREEGLKEIREIMKGIMRGKELFICFFVLGPTNSIFTIPAVQLTDSAYVAHSEFLLYRKGYEEFKRLGPTKNFFKFVHSAGELDERKTSKNLDKRRIYIDLLDETVYSANTQYGGNTIGLKKLAFRLTIQRAVKEGWLSEHMFLMRVNGPNGRKTYFTGAYPSMCGKTSTAMIPWENIVGDDLVFIKNVDGIARAVNVEIGVFGIIEGVNQKDDPIIWKVLHSPVEIIFSNVLVKDGKPYWNGMGIEIPDEGENHSGKWWRGKRDAEGKEIPPSHKNARFTVRLEAFPNLDREALNNPCGVEVGGMIFGGRDPDTWPPVREAFDWEHGVITMGASLESETTAATLGKEGVRAFNPMSILDFLSVHIGDYIRNYLEFGRKLKKTPKIFAVNYFLRENGRWLNEKLDKAVWLKWMELRVHNDVDAIETPIGYIPRYEDLKVLFKQVLNKDYSREDYEKQFKIRVPELLAKIERIWKIYEPIDNIPEELFKQLKDERERLLKAKAEFGDYISPFTLEKRI.

Substrate is bound by residues Arg83 and 217–219 (YGG). The Mn(2+) site is built by Lys226 and His245. Ser267 is a substrate binding site. 268–273 (MCGKTS) lines the GTP pocket. Cys269 is an active-site residue. Mn(2+) is bound at residue Asp286. Position 381–383 (381–383 (NAR)) interacts with substrate. Arg383 and Arg415 together coordinate GTP.

It belongs to the phosphoenolpyruvate carboxykinase [GTP] family. Mn(2+) is required as a cofactor.

The protein resides in the cytoplasm. The catalysed reaction is oxaloacetate + GTP = phosphoenolpyruvate + GDP + CO2. It participates in carbohydrate biosynthesis; gluconeogenesis. Its function is as follows. Catalyzes the conversion of oxaloacetate (OAA) to phosphoenolpyruvate (PEP), the rate-limiting step in the metabolic pathway that produces glucose from lactate and other precursors derived from the citric acid cycle. The polypeptide is Phosphoenolpyruvate carboxykinase [GTP] (Pyrococcus horikoshii (strain ATCC 700860 / DSM 12428 / JCM 9974 / NBRC 100139 / OT-3)).